We begin with the raw amino-acid sequence, 273 residues long: Undecaprenyl-diphosphatase (273 aa).

7 consecutive transmembrane segments (helical) span residues 6–26 (SLLI…LPVS), 45–65 (AKTF…VMFW), 90–110 (LTLI…LLFH), 116–136 (LFNP…LIAA), 190–210 (YAAS…ATAL), 222–242 (GDIP…LIAI), and 252–272 (ISFI…YVVF).

Belongs to the UppP family.

Its subcellular location is the cell inner membrane. It catalyses the reaction di-trans,octa-cis-undecaprenyl diphosphate + H2O = di-trans,octa-cis-undecaprenyl phosphate + phosphate + H(+). Its function is as follows. Catalyzes the dephosphorylation of undecaprenyl diphosphate (UPP). Confers resistance to bacitracin. In Escherichia coli O127:H6 (strain E2348/69 / EPEC), this protein is Undecaprenyl-diphosphatase.